Here is a 451-residue protein sequence, read N- to C-terminus: UDP-glycosyltransferase 76E11 (451 aa).

UDP-alpha-D-glucose-binding positions include S273, A332–Q334, H349–E357, and S371–Q374.

It belongs to the UDP-glycosyltransferase family.

Functionally, possesses low quercetin 3-O-glucosyltransferase and 7-O-glucosyltransferase activities in vitro. This is UDP-glycosyltransferase 76E11 (UGT76E11) from Arabidopsis thaliana (Mouse-ear cress).